Consider the following 411-residue polypeptide: Protein phosphatase 1 regulatory subunit 36 (411 aa).

In terms of assembly, interacts with PPP1CA.

Functionally, inhibits phosphatase activity of protein phosphatase 1 (PP1) complexes. The polypeptide is Protein phosphatase 1 regulatory subunit 36 (Ppp1r36) (Rattus norvegicus (Rat)).